Consider the following 220-residue polypeptide: tRNA (guanine-N(7)-)-methyltransferase (220 aa).

S-adenosyl-L-methionine-binding residues include Glu-42, Glu-67, and Asp-122. The active site involves Asp-122. Substrate contacts are provided by residues Lys-126, Asp-158, and 198-201; that span reads TEYE.

It belongs to the class I-like SAM-binding methyltransferase superfamily. TrmB family.

The enzyme catalyses guanosine(46) in tRNA + S-adenosyl-L-methionine = N(7)-methylguanosine(46) in tRNA + S-adenosyl-L-homocysteine. It functions in the pathway tRNA modification; N(7)-methylguanine-tRNA biosynthesis. In terms of biological role, catalyzes the formation of N(7)-methylguanine at position 46 (m7G46) in tRNA. In Mycoplasma capricolum subsp. capricolum (strain California kid / ATCC 27343 / NCTC 10154), this protein is tRNA (guanine-N(7)-)-methyltransferase.